A 219-amino-acid polypeptide reads, in one-letter code: 2-hydroxy-3-keto-5-methylthiopentenyl-1-phosphate phosphatase (219 aa).

The protein belongs to the HAD-like hydrolase superfamily. MtnX family.

The enzyme catalyses 2-hydroxy-5-methylsulfanyl-3-oxopent-1-enyl phosphate + H2O = 1,2-dihydroxy-5-(methylsulfanyl)pent-1-en-3-one + phosphate. The protein operates within amino-acid biosynthesis; L-methionine biosynthesis via salvage pathway; L-methionine from S-methyl-5-thio-alpha-D-ribose 1-phosphate: step 4/6. Dephosphorylates 2-hydroxy-3-keto-5-methylthiopentenyl-1-phosphate (HK-MTPenyl-1-P) yielding 1,2-dihydroxy-3-keto-5-methylthiopentene (DHK-MTPene). This is 2-hydroxy-3-keto-5-methylthiopentenyl-1-phosphate phosphatase from Bacillus thuringiensis (strain Al Hakam).